The primary structure comprises 481 residues: Squalene epoxidase erg1 (481 aa).

Residues 28–48 (HADVVIIGAGVLGCALAVALG) form a helical membrane-spanning segment. FAD is bound by residues 38–39 (VL), 58–59 (EA), Arg66, and Arg138. Residue Asn146 is glycosylated (N-linked (GlcNAc...) asparagine). FAD is bound by residues Asp319 and Met332. 2 helical membrane-spanning segments follow: residues 425–445 (KPSV…WVLL) and 452–472 (LFPV…VVIF).

This sequence belongs to the squalene monooxygenase family. Requires FAD as cofactor.

Its subcellular location is the endoplasmic reticulum membrane. It localises to the microsome membrane. The catalysed reaction is squalene + reduced [NADPH--hemoprotein reductase] + O2 = (S)-2,3-epoxysqualene + oxidized [NADPH--hemoprotein reductase] + H2O + H(+). Its pathway is steroid metabolism; ergosterol biosynthesis. Squalene epoxidase; part of the third module of ergosterol biosynthesis pathway that includes the late steps of the pathway. Erg1 catalyzes the epoxidation of squalene into 2,3-epoxysqualene. The third module or late pathway involves the ergosterol synthesis itself through consecutive reactions that mainly occur in the endoplasmic reticulum (ER) membrane. Firstly, the squalene synthase erg9 catalyzes the condensation of 2 farnesyl pyrophosphate moieties to form squalene, which is the precursor of all steroids. Squalene synthase is crucial for balancing the incorporation of farnesyl diphosphate (FPP) into sterol and nonsterol isoprene synthesis. Secondly, squalene is converted into lanosterol by the consecutive action of the squalene epoxidase erg1 and the lanosterol synthase erg7. Then, the delta(24)-sterol C-methyltransferase erg6 methylates lanosterol at C-24 to produce eburicol. Eburicol is the substrate of the sterol 14-alpha demethylase encoded by cyp51A and cyp51B, to yield 4,4,24-trimethyl ergosta-8,14,24(28)-trienol. The C-14 reductase erg24 then reduces the C14=C15 double bond which leads to 4,4-dimethylfecosterol. A sequence of further demethylations at C-4, involving the C-4 demethylation complex containing the C-4 methylsterol oxidases erg25A or erg25B, the sterol-4-alpha-carboxylate 3-dehydrogenase erg26 and the 3-keto-steroid reductase erg27, leads to the production of fecosterol via 4-methylfecosterol. The C-8 sterol isomerase erg2 then catalyzes the reaction which results in unsaturation at C-7 in the B ring of sterols and thus converts fecosterol to episterol. The sterol-C5-desaturase erg3B then catalyzes the introduction of a C-5 double bond in the B ring to produce 5-dehydroepisterol. The 2 other sterol-C5-desaturases, erg3A and erg3C, seem to be less important in ergosterol biosynthesis. The C-22 sterol desaturase erg5 further converts 5-dehydroepisterol into ergosta-5,7,22,24(28)-tetraen-3beta-ol by forming the C-22(23) double bond in the sterol side chain. Finally, ergosta-5,7,22,24(28)-tetraen-3beta-ol is substrate of the C-24(28) sterol reductases erg4A and erg4B to produce ergosterol. Possible alternative sterol biosynthetic pathways might exist from fecosterol to ergosterol, depending on the activities of the erg3 isoforms. The protein is Squalene epoxidase erg1 of Aspergillus fumigatus (strain ATCC MYA-4609 / CBS 101355 / FGSC A1100 / Af293) (Neosartorya fumigata).